Consider the following 1040-residue polypeptide: Exosome RNA helicase MTR4 (1040 aa).

Position 2 is an N-acetylalanine (alanine 2). A disordered region spans residues 16-77; sequence DSTSAAGAKK…GTDEPIFGKK (62 aa). Basic and acidic residues predominate over residues 23-33; the sequence is AKKDKEKEKWK. A Glycyl lysine isopeptide (Lys-Gly) (interchain with G-Cter in SUMO2) cross-link involves residue lysine 24. Serine 38 carries the post-translational modification Phosphoserine. The segment covering 41–50 has biased composition (basic and acidic residues); the sequence is KAGKRLDTKL. Residues lysine 49 and lysine 76 each carry the N6-acetyllysine modification. ATP contacts are provided by residues isoleucine 137, 159 to 166, serine 162, glycine 164, lysine 165, and threonine 166; that span reads AHTSAGKT. One can recognise a Helicase ATP-binding domain in the interval 146 to 302; it reads IQCVDNNQSV…WICHLHKQPC (157 aa). Positions 250–253 match the DEIH box motif; that stretch reads DEIH. Lysine 356 is covalently cross-linked (Glycyl lysine isopeptide (Lys-Gly) (interchain with G-Cter in SUMO2)). Positions 403–575 constitute a Helicase C-terminal domain; the sequence is QMTKLDFNTD…NMVLNLLRVE (173 aa). Residues lysine 682 and lysine 721 each participate in a glycyl lysine isopeptide (Lys-Gly) (interchain with G-Cter in SUMO2) cross-link.

The protein belongs to the helicase family. SKI2 subfamily. As to quaternary structure, component of a TRAMP-like complex, an ATP-dependent exosome regulatory complex consisting of a helicase (MTREX), an oligadenylate polymerase (TENT4B or TENT4A), and a substrate specific RNA-binding factor (ZCCHC7 or ZCCHC8). Several TRAMP-like complexes exist with specific compositions and are associated with nuclear, or nucleolar RNA exosomes. Identified in the spliceosome C complex. Component of the poly(A) tail exosome targeting (PAXT) complex made of PABPN1, ZFC3H1 and MTREX that directs a subset of long and polyadenylated poly(A) RNAs for exosomal degradation. Component of the nuclear exosome targeting (NEXT) complex composed of MTREX, ZCCHC8, and RBM7 that directs a subset of non-coding short-lived RNAs for exosomal degradation. Interacts with ZCCHC8; this interaction bridges the interaction between RBM7 and MTREX. Binds to ZFC3H1 and RBM7 in a RNase-insensitive manner. Interacts with EXOSC10; the interaction mediates the association of MTREX with nuclear RNA exosomes. Interacts with isoform 1 of NVL in an ATP-dependent manner; the interaction is required to associate NVL with nuclear RNA exosome. Interacts with WDR74; the interaction dissociation in a late stage of rRNA synthesis is required for appropriate maturation of pre-60S particles and depends on the ATPase activity of NVL. Interacts with MPHOSPH6. Interacts with the RNA cap-binding complex proteins NCBP1 and SRRT. Interacts with NRDE2; the interaction is direct and negatively regulates MTREX function in exosomal degradation by changing its conformation precluding interaction with ZFC3H1, the RNA cap-binding complex proteins NCBP1 and SRRT, and association with the exosome. Associates with the RNA exosome complex.

Its subcellular location is the nucleus. The protein localises to the nucleoplasm. It localises to the nucleolus. The protein resides in the nucleus speckle. The enzyme catalyses ATP + H2O = ADP + phosphate + H(+). With respect to regulation, activated when MTREX is incorporated into NEXT complex an the nuclear RNA exosome complex. Catalyzes the ATP-dependent unwinding of RNA duplexes with a single-stranded 3' RNA extension. Central subunit of many protein complexes, namely TRAMP-like, nuclear exosome targeting (NEXT) and poly(A) tail exosome targeting (PAXT). NEXT functions as an RNA exosome cofactor that directs a subset of non-coding short-lived RNAs for exosomal degradation. NEXT is involved in surveillance and turnover of aberrant transcripts and non-coding RNAs. PAXT directs a subset of long and polyadenylated poly(A) RNAs for exosomal degradation. The RNA exosome is fundamental for the degradation of RNA in eukaryotic nuclei. Substrate targeting is facilitated by its cofactor ZCCHC8, which links to RNA-binding protein adapters. Associated with the RNA exosome complex and involved in the 3'-processing of the 7S pre-RNA to the mature 5.8S rRNA. May be involved in pre-mRNA splicing. In the context of NEXT complex can also in vitro unwind DNA:RNA heteroduplexes with a 3' poly (A) RNA tracking strand. Can promote unwinding and degradation of structured RNA substrates when associated with the nuclear exosome and its cofactors. Can displace a DNA strand while translocating on RNA to ultimately degrade the RNA within a DNA/RNA heteroduplex. Plays a role in DNA damage response. This is Exosome RNA helicase MTR4 from Mus musculus (Mouse).